The primary structure comprises 286 residues: Thiamine-monophosphate kinase (286 aa).

Residues D22, S36, T37, and D38 each coordinate Mg(2+). D45 is a binding site for substrate. Mg(2+) contacts are provided by D66 and D111. ATP-binding positions include 110–111 (GD) and R136. D191 serves as a coordination point for Mg(2+). S193 is a binding site for ATP. Residue D194 participates in Mg(2+) binding. Residue Y282 coordinates substrate.

It belongs to the thiamine-monophosphate kinase family.

The enzyme catalyses thiamine phosphate + ATP = thiamine diphosphate + ADP. The protein operates within cofactor biosynthesis; thiamine diphosphate biosynthesis; thiamine diphosphate from thiamine phosphate: step 1/1. Its function is as follows. Catalyzes the ATP-dependent phosphorylation of thiamine-monophosphate (TMP) to form thiamine-pyrophosphate (TPP), the active form of vitamin B1. The chain is Thiamine-monophosphate kinase from Methanospirillum hungatei JF-1 (strain ATCC 27890 / DSM 864 / NBRC 100397 / JF-1).